Consider the following 210-residue polypeptide: NAD(P)H-quinone oxidoreductase subunit I (210 aa).

2 4Fe-4S ferredoxin-type domains span residues 55–84 (GRIH…VDWV) and 95–124 (RNYS…MTEE). [4Fe-4S] cluster-binding residues include Cys64, Cys67, Cys70, Cys74, Cys104, Cys107, Cys110, and Cys114.

It belongs to the complex I 23 kDa subunit family. NDH-1 is composed of at least 11 different subunits. The cofactor is [4Fe-4S] cluster.

It localises to the cellular thylakoid membrane. It carries out the reaction a plastoquinone + NADH + (n+1) H(+)(in) = a plastoquinol + NAD(+) + n H(+)(out). It catalyses the reaction a plastoquinone + NADPH + (n+1) H(+)(in) = a plastoquinol + NADP(+) + n H(+)(out). Functionally, NDH-1 shuttles electrons from an unknown electron donor, via FMN and iron-sulfur (Fe-S) centers, to quinones in the respiratory and/or the photosynthetic chain. The immediate electron acceptor for the enzyme in this species is believed to be plastoquinone. Couples the redox reaction to proton translocation, and thus conserves the redox energy in a proton gradient. The sequence is that of NAD(P)H-quinone oxidoreductase subunit I from Synechococcus sp. (strain CC9902).